The chain runs to 874 residues: Alanine--tRNA ligase (874 aa).

Zn(2+)-binding residues include His-564, His-568, Cys-665, and His-669.

Belongs to the class-II aminoacyl-tRNA synthetase family. Zn(2+) serves as cofactor.

It is found in the cytoplasm. It catalyses the reaction tRNA(Ala) + L-alanine + ATP = L-alanyl-tRNA(Ala) + AMP + diphosphate. Catalyzes the attachment of alanine to tRNA(Ala) in a two-step reaction: alanine is first activated by ATP to form Ala-AMP and then transferred to the acceptor end of tRNA(Ala). Also edits incorrectly charged Ser-tRNA(Ala) and Gly-tRNA(Ala) via its editing domain. The chain is Alanine--tRNA ligase from Paraburkholderia phytofirmans (strain DSM 17436 / LMG 22146 / PsJN) (Burkholderia phytofirmans).